A 205-amino-acid polypeptide reads, in one-letter code: Cytochrome c biogenesis ATP-binding export protein CcmA (205 aa).

The region spanning 2–204 is the ABC transporter domain; that stretch reads LEVSNLTAIR…SPKLRKIKLG (203 aa). 34-41 provides a ligand contact to ATP; it reads GRNGTGKT.

This sequence belongs to the ABC transporter superfamily. CcmA exporter (TC 3.A.1.107) family. In terms of assembly, the complex is composed of two ATP-binding proteins (CcmA) and two transmembrane proteins (CcmB).

The protein resides in the cell inner membrane. It catalyses the reaction heme b(in) + ATP + H2O = heme b(out) + ADP + phosphate + H(+). In terms of biological role, part of the ABC transporter complex CcmAB involved in the biogenesis of c-type cytochromes; once thought to export heme, this seems not to be the case, but its exact role is uncertain. Responsible for energy coupling to the transport system. This Vibrio parahaemolyticus serotype O3:K6 (strain RIMD 2210633) protein is Cytochrome c biogenesis ATP-binding export protein CcmA.